The sequence spans 406 residues: Putative sodium-coupled neutral amino acid transporter 11 (406 aa).

At 1–7 (MKQAGFP) the chain is on the cytoplasmic side. Residues 8–28 (LGILLLFWVSYVTDFSLVLLI) form a helical membrane-spanning segment. A glycan (N-linked (GlcNAc...) asparagine) is linked at Asn-44. 6 helical membrane passes run 48–68 (GFPGYLLLSVLQFLYPFIAMI), 93–113 (VFIGRHFIIGLSTVTFTLPLS), 121–141 (LGKVSLISTGLTTLILGIVMA), 156–176 (AWVFAKPNAIQAVGVMSFAFI), 202–222 (MSIVISVFICIFFATCGYLTF), and 241–263 (VTFGRFCYGVTVILTYPMECFVT). N-linked (GlcNAc...) asparagine glycosylation is present at Asn-275. A run of 3 helical transmembrane segments spans residues 279 to 299 (VFHIVVTVMVITVATLVSLLI), 301 to 321 (CLGIVLELNGVLCATPLIFII), and 340 to 360 (IMSCVMLPIGAVVMVFGFVMA).

The protein belongs to the amino acid/polyamine transporter 2 family.

It is found in the membrane. Functionally, putative sodium-dependent amino acid/proton antiporter. The sequence is that of Putative sodium-coupled neutral amino acid transporter 11 (SLC38A11) from Homo sapiens (Human).